Here is a 120-residue protein sequence, read N- to C-terminus: MPKIGVSLIVLIMLIIFLAGCNKNEQNGDETKMQSLVGYVVLKDNERAILITDTKAPGKEDYNLSEGQLMNKFKNNIVIVGLSEIDNTDDLKRGEKIKVWFHTRKESNPPSATIQKYELL.

A signal peptide spans 1–27 (MPKIGVSLIVLIMLIIFLAGCNKNEQN).

This is an uncharacterized protein from Bacillus subtilis (strain 168).